A 99-amino-acid chain; its full sequence is Small ribosomal subunit protein uS14m (99 aa).

The protein belongs to the universal ribosomal protein uS14 family.

Its subcellular location is the mitochondrion. The chain is Small ribosomal subunit protein uS14m (RPS14) from Marchantia polymorpha (Common liverwort).